The sequence spans 417 residues: Serine hydroxymethyltransferase (417 aa).

Residues leucine 121 and 125–127 (GHL) each bind (6S)-5,6,7,8-tetrahydrofolate. Lysine 229 is subject to N6-(pyridoxal phosphate)lysine. 355-357 (SPF) lines the (6S)-5,6,7,8-tetrahydrofolate pocket.

The protein belongs to the SHMT family. As to quaternary structure, homodimer. It depends on pyridoxal 5'-phosphate as a cofactor.

Its subcellular location is the cytoplasm. The enzyme catalyses (6R)-5,10-methylene-5,6,7,8-tetrahydrofolate + glycine + H2O = (6S)-5,6,7,8-tetrahydrofolate + L-serine. Its pathway is one-carbon metabolism; tetrahydrofolate interconversion. The protein operates within amino-acid biosynthesis; glycine biosynthesis; glycine from L-serine: step 1/1. Catalyzes the reversible interconversion of serine and glycine with tetrahydrofolate (THF) serving as the one-carbon carrier. This reaction serves as the major source of one-carbon groups required for the biosynthesis of purines, thymidylate, methionine, and other important biomolecules. Also exhibits THF-independent aldolase activity toward beta-hydroxyamino acids, producing glycine and aldehydes, via a retro-aldol mechanism. The polypeptide is Serine hydroxymethyltransferase (Xylella fastidiosa (strain 9a5c)).